The primary structure comprises 368 residues: Agmatine deiminase (368 aa).

Cys357 acts as the Amidino-cysteine intermediate in catalysis.

The protein belongs to the agmatine deiminase family. As to quaternary structure, homodimer.

The catalysed reaction is agmatine + H2O = N-carbamoylputrescine + NH4(+). The protein operates within amine and polyamine biosynthesis; putrescine biosynthesis via agmatine pathway; N-carbamoylputrescine from agmatine: step 1/1. Its function is as follows. Mediates the hydrolysis of agmatine into N-carbamoylputrescine in the arginine decarboxylase (ADC) pathway of putrescine biosynthesis, a basic polyamine. This chain is Agmatine deiminase, found in Pseudomonas syringae pv. syringae (strain B728a).